Reading from the N-terminus, the 262-residue chain is Ferric siderophore reductase (262 aa).

Positions 244, 245, 256, and 259 each coordinate [2Fe-2S] cluster.

As to quaternary structure, monomer. The cofactor is [2Fe-2S] cluster.

It localises to the cytoplasm. It is found in the cell inner membrane. Its activity is regulated as follows. Displays pH dependent redox properties. SufD is necessary for the stability of FhuF. Siderophore-iron reductase which is involved in iron removal from the hydroxamate-type siderophores coprogen, ferrichrome and ferrioxamine B after their transport into the cell. Binds both the iron-loaded and the apo forms of ferrichrome. In Escherichia coli (strain K12), this protein is Ferric siderophore reductase (fhuF).